The following is a 517-amino-acid chain: Maturase K (517 aa).

This sequence belongs to the intron maturase 2 family. MatK subfamily.

The protein localises to the plastid. It localises to the chloroplast. Functionally, usually encoded in the trnK tRNA gene intron. Probably assists in splicing its own and other chloroplast group II introns. The chain is Maturase K from Caryota mitis (Burmese fishtail palm).